We begin with the raw amino-acid sequence, 62 residues long: Photosystem II reaction center protein Z (62 aa).

A run of 2 helical transmembrane segments spans residues 8–28 and 41–61; these read LVLL…VVLA and YTGA…NSLV.

This sequence belongs to the PsbZ family. PSII is composed of 1 copy each of membrane proteins PsbA, PsbB, PsbC, PsbD, PsbE, PsbF, PsbH, PsbI, PsbJ, PsbK, PsbL, PsbM, PsbT, PsbX, PsbY, PsbZ, Psb30/Ycf12, at least 3 peripheral proteins of the oxygen-evolving complex and a large number of cofactors. It forms dimeric complexes.

The protein localises to the plastid. It is found in the chloroplast thylakoid membrane. Its function is as follows. May control the interaction of photosystem II (PSII) cores with the light-harvesting antenna, regulates electron flow through the 2 photosystem reaction centers. PSII is a light-driven water plastoquinone oxidoreductase, using light energy to abstract electrons from H(2)O, generating a proton gradient subsequently used for ATP formation. This Porphyra purpurea (Red seaweed) protein is Photosystem II reaction center protein Z.